A 668-amino-acid polypeptide reads, in one-letter code: uncharacterized protein (668 aa).

9 consecutive transmembrane segments (helical) span residues 182 to 202 (FAFA…GILG), 208 to 228 (PYSY…IQFW), 286 to 306 (VPLF…AFIV), 321 to 341 (IVSL…TFIY), 379 to 399 (ALFL…PHYI), 430 to 450 (IYFL…VPQL), 499 to 519 (FVLM…APIF), 557 to 577 (LSLL…FYSS), and 587 to 607 (VIAA…RMFI).

The protein resides in the membrane. This is an uncharacterized protein from Schizosaccharomyces pombe (strain 972 / ATCC 24843) (Fission yeast).